Reading from the N-terminus, the 237-residue chain is Mannose-specific lectin alpha chain (237 aa).

The Mn(2+) site is built by E8 and D10. Residues D10, Y12, N14, and D19 each coordinate Ca(2+). Y12 lines the a carbohydrate pocket. D19, H24, and S34 together coordinate Mn(2+). 99-100 (LY) is an a carbohydrate binding site. D208 contributes to the Ca(2+) binding site. R228 contacts a carbohydrate.

It belongs to the leguminous lectin family. As to quaternary structure, homotetramer. Post-translationally, the beta and gamma chains are produced by partial proteolytic processing of the lectin alpha chain by an asparaginyl endopeptidase.

In terms of biological role, D-mannose/D-glucose-binding lectin. Also binds derivatives of glucose and mannose such as more complex glycans. In Cymbosema roseum (Dioclea purpurea), this protein is Mannose-specific lectin alpha chain.